The following is a 104-amino-acid chain: Large ribosomal subunit protein uL24 (104 aa).

Belongs to the universal ribosomal protein uL24 family. As to quaternary structure, part of the 50S ribosomal subunit.

Its function is as follows. One of two assembly initiator proteins, it binds directly to the 5'-end of the 23S rRNA, where it nucleates assembly of the 50S subunit. In terms of biological role, one of the proteins that surrounds the polypeptide exit tunnel on the outside of the subunit. The polypeptide is Large ribosomal subunit protein uL24 (Bradyrhizobium diazoefficiens (strain JCM 10833 / BCRC 13528 / IAM 13628 / NBRC 14792 / USDA 110)).